The following is a 294-amino-acid chain: 4-hydroxy-tetrahydrodipicolinate synthase (294 aa).

Thr47 lines the pyruvate pocket. Catalysis depends on Tyr135, which acts as the Proton donor/acceptor. Catalysis depends on Lys163, which acts as the Schiff-base intermediate with substrate. Ile206 serves as a coordination point for pyruvate.

The protein belongs to the DapA family. In terms of assembly, homodimer.

It localises to the cytoplasm. It carries out the reaction L-aspartate 4-semialdehyde + pyruvate = (2S,4S)-4-hydroxy-2,3,4,5-tetrahydrodipicolinate + H2O + H(+). The protein operates within amino-acid biosynthesis; L-lysine biosynthesis via DAP pathway; (S)-tetrahydrodipicolinate from L-aspartate: step 3/4. Functionally, catalyzes the condensation of (S)-aspartate-beta-semialdehyde [(S)-ASA] and pyruvate to 4-hydroxy-tetrahydrodipicolinate (HTPA). This Staphylococcus epidermidis (strain ATCC 35984 / DSM 28319 / BCRC 17069 / CCUG 31568 / BM 3577 / RP62A) protein is 4-hydroxy-tetrahydrodipicolinate synthase.